Reading from the N-terminus, the 294-residue chain is NAD kinase (294 aa).

Residue aspartate 73 is the Proton acceptor of the active site. Residues 73–74, 147–148, histidine 158, arginine 175, aspartate 177, and 188–193 each bind NAD(+); these read DG, NE, and TAYALS.

Belongs to the NAD kinase family. The cofactor is a divalent metal cation.

It localises to the cytoplasm. It carries out the reaction NAD(+) + ATP = ADP + NADP(+) + H(+). Functionally, involved in the regulation of the intracellular balance of NAD and NADP, and is a key enzyme in the biosynthesis of NADP. Catalyzes specifically the phosphorylation on 2'-hydroxyl of the adenosine moiety of NAD to yield NADP. In Tolumonas auensis (strain DSM 9187 / NBRC 110442 / TA 4), this protein is NAD kinase.